Here is a 657-residue protein sequence, read N- to C-terminus: Transmembrane protein 232 (657 aa).

2 helical membrane-spanning segments follow: residues 168-188 and 353-373; these read IGYL…LESF and WAWN…LYAA.

It localises to the membrane. Its function is as follows. Plays a critical role for male fertility and sperm motility by regulating sperm cytoplasm removal and maintaining axoneme integrity. This Homo sapiens (Human) protein is Transmembrane protein 232 (TMEM232).